We begin with the raw amino-acid sequence, 354 residues long: Hydrophobic dipeptide epimerase (354 aa).

Substrate-binding positions include Thr134, Lys159, and 159-161; that span reads KIK. Mg(2+) is bound at residue Asp189. A substrate-binding site is contributed by Asn191. The Mg(2+) site is built by Glu215 and Asp240. Substrate-binding positions include Lys264, 292–295, and 318–320; these read CMAE and DLD.

This sequence belongs to the mandelate racemase/muconate lactonizing enzyme family. Mg(2+) serves as cofactor.

Its function is as follows. Catalyzes the epimerization of L-Ile-L-Tyr to L-Ile-D-Tyr (in vitro). Catalyzes the epimerization of dipeptides, with a preference for substrates with a hydrophobic or basic amino acid in the first position, followed by an aromatic residue in the second position. Has epimerase activity with L-Ile-L-Tyr, L-Val-L-Tyr and L-Arg-L-Tyr (in vitro). This chain is Hydrophobic dipeptide epimerase, found in Enterococcus faecalis (strain ATCC 700802 / V583).